A 556-amino-acid chain; its full sequence is Vacuolar protein 8 (556 aa).

Glycine 2 carries N-myristoyl glycine lipidation. 3 S-palmitoyl cysteine lipidation sites follow: cysteine 4, cysteine 5, and cysteine 7. ARM repeat units follow at residues 38 to 74, 75 to 115, 117 to 156, 158 to 197, 199 to 238, 242 to 281, 283 to 322, 324 to 364, and 408 to 447; these read NRSEVDFFTDGPLRALSTLVYSENIDLQRSAALAFAE, VTEK…NLAV, DSNKVLIVNMGGLEPLIRQMMSPNIEVQCNAVGCITNLAT, DQNKSKIATSGALIPLTKLAKSKDLRVQRNATGALLNMTH, LENRQELVNAGSVPILVQLLSSTDPDVQYYCTTALSNIAV, NRKKLASTEPKLISQLVQLMDSTSPRVQCQATLALRNLAS, ANYQLEIVRAGGLPNLVTLLNSTHQPLVLAAVACIRNISI, PLNE…NLAA, and DDLKMKLLDSNIIEVLLPLTSSENGEVCGNAAAALANLCS.

It belongs to the beta-catenin family.

The protein localises to the vacuole membrane. Functions in both vacuole inheritance and protein targeting from the cytoplasm to vacuole. This chain is Vacuolar protein 8 (VAC8), found in Komagataella pastoris (Yeast).